Consider the following 197-residue polypeptide: Imidazoleglycerol-phosphate dehydratase (197 aa).

The protein belongs to the imidazoleglycerol-phosphate dehydratase family.

Its subcellular location is the cytoplasm. The enzyme catalyses D-erythro-1-(imidazol-4-yl)glycerol 3-phosphate = 3-(imidazol-4-yl)-2-oxopropyl phosphate + H2O. It participates in amino-acid biosynthesis; L-histidine biosynthesis; L-histidine from 5-phospho-alpha-D-ribose 1-diphosphate: step 6/9. This is Imidazoleglycerol-phosphate dehydratase (hisB) from Streptomyces coelicolor (strain ATCC BAA-471 / A3(2) / M145).